Here is a 196-residue protein sequence, read N- to C-terminus: Heat shock protein beta-8 (196 aa).

Phosphoserine occurs at positions 24 and 57. At Thr63 the chain carries Phosphothreonine; by PKC; in vitro. Asymmetric dimethylarginine occurs at positions 71 and 78. A sHSP domain is found at 74–185; the sequence is TATARFGVPA…TFGESSFNNE (112 aa). The tract at residues 176-196 is disordered; it reads TFGESSFNNELPQDSQEVTCT. Over residues 177-196 the composition is skewed to polar residues; the sequence is FGESSFNNELPQDSQEVTCT.

Belongs to the small heat shock protein (HSP20) family. In terms of assembly, monomer. Forms a ternary complex with BAG3 and HSPA1A. Component of the chaperone-assisted selective autophagy (CASA) complex consisting of BAG3, HSPA8/HSC70, HSPB8 and STUB1/CHIP. Interacts with HSPB1. Interacts with DNAJB6. Interacts with BAG3. Predominantly expressed in skeletal muscle and heart.

Its subcellular location is the cytoplasm. It localises to the nucleus. Involved in the chaperone-assisted selective autophagy (CASA), a crucial process for protein quality control, particularly in mechanical strained cells and tissues such as muscle. Displays temperature-dependent chaperone activity. The sequence is that of Heat shock protein beta-8 (HSPB8) from Homo sapiens (Human).